An 854-amino-acid polypeptide reads, in one-letter code: MTEMPKKTGRKFKFFKFKGLGSLSNLPRSFSLRRSSASASIRSCPEPDTFEATQDDMVTLPKSPPAYARSSDMYSHMGTMPRPNIKKAQKQQAVQKAQEVSRESHLVSRRLPEPPDLEAAKEAGEGTEALLEDTAPSAVEVDPMRELEDLTVDTEKEQVPGDVSPERTAAELEAAGDYVKFSKEKYILDSSPEKLHKELEEELKLSSTDLRSHAWYHGRIPREVSETLVQRNGDFLIRDSLTSLGDYVLTCRWHNQALHFKINKVVVKAGESYTHIRYLFEQESFDHVPALVRYHVGSRKAVSEQSGAIIYCPVNRTFPLRYLEASYGLSQGSSKTASPASPSGSKGSHMKRRSITMTDGLTTDKVTRSDGCPNSTSLPHPRDSIRNCALSMDQIPDLHSPLSPISESPSSPAYSTVTRVHAPSATPSTSAQPASPVARRSSEPQLCPGNTPKPPGESDRAPHASPSHTLCKASPSPSLSSYSDPDSGHYCQLQPPVRGSREQAAGETPRKARGSGERQKELLENGVSDGEWGKTFTVPVVEATSSFNLATFQSQLIPKENRPLEVALLRKVKELLSEVDARTLARHVTKVDCLVARILGVTKEMQTLMGVRWGMELLTLPHGRQLRLDLLERFHTMSIMLAVDILGCTGSAEERAALLHKTIQLAAELRGTMGNMFSFAAVMGALEMAQISRLEQTWMTLRQRHTEGAILYEKKLKPFLKSLNEGKEGPPLSNTTFPHVLPFITLLECDSAPAEGPEPWGSTEHGVEVVLAHLEAARTVAHHGGLYHTNAEVKLQGFQARPELLEVFSTEFQMRLLWGSQGANSSQAWRYEKFDKVLTALSHKLEPAIRSSEL.

The residue at position 22 (Ser22) is a Phosphoserine. Residues 34 to 43 (RSSASASIRS) are compositionally biased toward low complexity. Positions 34–129 (RSSASASIRS…AKEAGEGTEA (96 aa)) are disordered. Residues 99–124 (EVSRESHLVSRRLPEPPDLEAAKEAG) are compositionally biased toward basic and acidic residues. An SH2 domain is found at 215-314 (WYHGRIPREV…QSGAIIYCPV (100 aa)). A phosphotyrosine mark is found at Tyr273 and Tyr278. Disordered stretches follow at residues 330–384 (SQGS…PRDS), 398–417 (LHSP…YSTV), and 422–520 (APSA…ERQK). Residues 333–347 (SSKTASPASPSGSKG) are compositionally biased toward low complexity. Ser354 is modified (phosphoserine). Composition is skewed to low complexity over residues 400–415 (SPLS…PAYS), 422–436 (APSA…PASP), and 474–485 (SPSPSLSSYSDP). Ser435 is subject to Phosphoserine. The span at 508 to 520 (TPRKARGSGERQK) shows a compositional bias: basic and acidic residues. A Ras-GEF domain is found at 580 to 848 (DARTLARHVT…TALSHKLEPA (269 aa)). Tyr787 is subject to Phosphotyrosine.

In terms of assembly, component of a complex comprised of SH2D3C, BCAR1/CAS, and CRK. Within the complex, interacts with CRK and (via C-terminus) with BCAR1/CAS (via C-terminus). Interacts with NEDD9/HEF1. Interacts with EPHB2. As to quaternary structure, interacts with NEDD9/HEF1. Interacts with BCAR1/CAS. Interacts with PTK2B. Interacts (via C-terminus) with BCAR1/CAS (via C-terminus). Interacts with IGF1. Post-translationally, phosphorylated by MAPK/ERK upon T-cell receptor stimulation in T-cells. In terms of tissue distribution, expressed in the olfactory bulb and olfactory sensory neurons (at protein level). Expressed in B cells (at protein level). Expressed in T lymphocytes. As to expression, expressed in hematopoietic cells from spleen, lymph node and thymus (at protein level). Expressed weakly in the lung (at protein level). Expressed in the brain, lung, kidney, and weakly expressed in the liver and lung (at protein level).

The protein localises to the cytoplasm. The protein resides in the cell membrane. It localises to the cell projection. It is found in the axon. Its subcellular location is the ruffle membrane. Functionally, acts as an adapter protein that mediates cell signaling pathways involved in cellular functions such as cell adhesion and migration, tissue organization, and the regulation of the immune response. Plays a role in integrin-mediated cell adhesion through BCAR1-CRK-RAPGEF1 signaling and activation of the small GTPase RAP1. Promotes cell migration and invasion through the extracellular matrix. Required for marginal zone B-cell development and thymus-independent type 2 immune responses. Mediates migration and adhesion of B cells in the splenic marginal zone via promoting hyperphosphorylation of NEDD9/CASL. Plays a role in CXCL13-induced chemotaxis of B-cells. Plays a role in the migration of olfactory sensory neurons (OSNs) into the forebrain and the innervation of the olfactory bulb by the OSN axons during development. Required for the efficient tyrosine phosphorylation of BCAR1 in OSN axons. Important regulator of chemokine-induced, integrin-mediated T lymphocyte adhesion and migration, acting upstream of RAP1. Required for tissue-specific adhesion of T lymphocytes to peripheral tissues. Required for basal and CXCL2 stimulated serine-threonine phosphorylation of NEDD9. May be involved in the regulation of T-cell receptor-mediated IL2 production through the activation of the JNK pathway in T-cells. In terms of biological role, may be involved in the BCAR1/CAS-mediated JNK activation pathway. The chain is SH2 domain-containing protein 3C (Sh2d3c) from Mus musculus (Mouse).